The primary structure comprises 425 residues: Serine--tRNA ligase (425 aa).

An L-serine-binding site is contributed by 231–233 (TAE). ATP-binding positions include 262 to 264 (RTE) and Val-278. Glu-285 contributes to the L-serine binding site. 349–352 (EVTS) is an ATP binding site. Thr-384 provides a ligand contact to L-serine.

This sequence belongs to the class-II aminoacyl-tRNA synthetase family. Type-1 seryl-tRNA synthetase subfamily. As to quaternary structure, homodimer. The tRNA molecule binds across the dimer.

It is found in the cytoplasm. It carries out the reaction tRNA(Ser) + L-serine + ATP = L-seryl-tRNA(Ser) + AMP + diphosphate + H(+). The catalysed reaction is tRNA(Sec) + L-serine + ATP = L-seryl-tRNA(Sec) + AMP + diphosphate + H(+). It participates in aminoacyl-tRNA biosynthesis; selenocysteinyl-tRNA(Sec) biosynthesis; L-seryl-tRNA(Sec) from L-serine and tRNA(Sec): step 1/1. Its function is as follows. Catalyzes the attachment of serine to tRNA(Ser). Is also able to aminoacylate tRNA(Sec) with serine, to form the misacylated tRNA L-seryl-tRNA(Sec), which will be further converted into selenocysteinyl-tRNA(Sec). The sequence is that of Serine--tRNA ligase from Dictyoglomus thermophilum (strain ATCC 35947 / DSM 3960 / H-6-12).